The primary structure comprises 452 residues: MQRRIMGIETEFGVTCTFHGHRRLSPDEVARYLFRRVVSWGRSSNVFLRNGARLYLDVGSHPEYATAECDSLVQLVTHDRAGEWVLEDLLVDAEQRLADEGIGGDIYLFKNNTDSAGNSYGCHENYLIVRAGEFSRISDVLLPFLVTRQLICGAGKVLQTPKAATFCLSQRAEHIWEGVSSATTRSRPIINTRDEPHADAEKYRRLHVIVGDSNMCETTTMLKVGTASLVLEMIEAGVPFRDFSLDNPIRAIREVSHDVTGRRPVRLAGGRQASALDIQREYYSRAVEHLQTREPNAQVEQVVDLWGRQLDAVESQDFAKVDTEIDWVIKRKLFQRYQDRYNMELSDPKIAQLDLAYHDIKRGRGVFDLLQRKGLATRVTTDEEIADAVDNPPQTTRARLRGEFISAAQAAGRDFTVDWVHLKLNDQAQRTVLCKDPFRAVDERVKRLIASM.

E9 serves as a coordination point for Mg(2+). R53 provides a ligand contact to ATP. Y55 contributes to the Mg(2+) binding site. The active-site Proton acceptor is D57. E63 is a Mg(2+) binding site. Positions 66 and 419 each coordinate ATP.

This sequence belongs to the Pup ligase/Pup deamidase family. Pup-conjugating enzyme subfamily.

The catalysed reaction is ATP + [prokaryotic ubiquitin-like protein]-L-glutamate + [protein]-L-lysine = ADP + phosphate + N(6)-([prokaryotic ubiquitin-like protein]-gamma-L-glutamyl)-[protein]-L-lysine.. Its pathway is protein degradation; proteasomal Pup-dependent pathway. It participates in protein modification; protein pupylation. Catalyzes the covalent attachment of the prokaryotic ubiquitin-like protein modifier Pup to the proteasomal substrate proteins, thereby targeting them for proteasomal degradation. This tagging system is termed pupylation. The ligation reaction involves the side-chain carboxylate of the C-terminal glutamate of Pup and the side-chain amino group of a substrate lysine. The protein is Pup--protein ligase of Mycobacterium ulcerans (strain Agy99).